A 234-amino-acid chain; its full sequence is Ribonuclease HII (234 aa).

Positions 16–207 constitute an RNase H type-2 domain; that stretch reads ALVAGVDEAG…VRRMLTPKAI (192 aa). A divalent metal cation-binding residues include D22, E23, and D115.

Belongs to the RNase HII family. Mn(2+) serves as cofactor. It depends on Mg(2+) as a cofactor.

The protein resides in the cytoplasm. It catalyses the reaction Endonucleolytic cleavage to 5'-phosphomonoester.. Functionally, endonuclease that specifically degrades the RNA of RNA-DNA hybrids. This Xylella fastidiosa (strain M12) protein is Ribonuclease HII.